A 1036-amino-acid chain; its full sequence is Vacuolar basic amino acid transporter VSB1 (1036 aa).

Over 1 to 213 the chain is Vacuolar; it reads MGRTIRRRRS…SKFAHYLPAA (213 aa). Ser-42 and Ser-127 each carry phosphoserine. Thr-130 bears the Phosphothreonine mark. Phosphoserine is present on residues Ser-140, Ser-144, Ser-149, Ser-152, and Ser-153. The helical transmembrane segment at 214-234 threads the bilayer; it reads VLGLLLNILDALSYGMIIFPI. Residues 235-236 are Cytoplasmic-facing; it reads TE. The chain crosses the membrane as a helical span at residues 237–257; it reads PVFSHLGPTGISMFYISTIIS. Residues 258–269 are Vacuolar-facing; sequence QAVYSGGWSSFP. The helical transmembrane segment at 270–290 threads the bilayer; that stretch reads SGIGSEMIEITPFYHTMALAI. Over 291–300 the chain is Cytoplasmic; that stretch reads KEALAGNDDE. The chain crosses the membrane as a helical span at residues 301-321; it reads IITTTIFCYVISSMLTGVVFY. Over 322-338 the chain is Vacuolar; the sequence is ALGKLRLGKIVGFFPRH. The helical transmembrane segment at 339–359 threads the bilayer; sequence ILIGCIGGVGYFLIITGIEVT. Over 360 to 375 the chain is Cytoplasmic; it reads TRVAKFEYSWPFFSGL. Residues 376–396 traverse the membrane as a helical segment; the sequence is FTDYDTLAKWLLPVLLTVVLI. Topologically, residues 397–405 are vacuolar; sequence GTQRYFKNS. The chain crosses the membrane as a helical span at residues 406–426; sequence LVLPSFYILTLVLFHFIVAII. Topologically, residues 427 to 473 are cytoplasmic; sequence PTLSLDALRQAGWIFPIANSDSKWYDHYRLFNVHKVHWSLVLQQIPT. The helical transmembrane segment at 474 to 494 threads the bilayer; the sequence is MMALTFFGILHVPINVPALAM. At 495–515 the chain is on the vacuolar side; it reads SLQMDKYDVDRELIAHGYSNF. Residues 516-536 form a helical membrane-spanning segment; it reads FSGLLGSVQNYLVYTNSVLFI. The Cytoplasmic segment spans residues 537 to 546; sequence RAGADSPFAG. Residues 547-567 traverse the membrane as a helical segment; it reads FLLIALTICIMIIGPVIISFI. Pro-568 is a topological domain (vacuolar). The chain crosses the membrane as a helical span at residues 569–589; sequence ICIVGSLIFLLGYELLVEALV. The Cytoplasmic portion of the chain corresponds to 590–604; sequence DTWNKLNRFEYLTVV. The chain crosses the membrane as a helical span at residues 605–625; the sequence is IIVFTMGIFDFVLGIIVGILI. The Vacuolar segment spans residues 626–664; the sequence is ACFSFLVDSTKLQTINGEYNGNVARSTVYRDYVQTKFLD. Residues 660–781 enclose the STAS domain; the sequence is TKFLDGIGEQ…ADLNSALEWC (122 aa). The chain crosses the membrane as a helical span at residues 665 to 685; the sequence is GIGEQIYVLKLQNLLFFGTII. Topologically, residues 686-1036 are cytoplasmic; the sequence is SIEEKIERLL…ELLGYTLVSA (351 aa). Position 842 is a phosphoserine (Ser-842). Thr-847 bears the Phosphothreonine mark.

Its subcellular location is the vacuole membrane. Its function is as follows. Amino acid transporter involved in vacuolar uptake of basic amino acids for storage during nitrogen replete condititions. May function as an amino acid/proton antiporter. In Saccharomyces cerevisiae (strain ATCC 204508 / S288c) (Baker's yeast), this protein is Vacuolar basic amino acid transporter VSB1.